The chain runs to 505 residues: Maturase K (505 aa).

Belongs to the intron maturase 2 family. MatK subfamily.

The protein resides in the plastid. The protein localises to the chloroplast. In terms of biological role, usually encoded in the trnK tRNA gene intron. Probably assists in splicing its own and other chloroplast group II introns. This chain is Maturase K, found in Phaulothamnus spinescens (Snake-eyes).